The chain runs to 154 residues: MHCPFCGANDTKVIDSRLVAEGEQVRRRRECLACGERFTTFETAELVMPRLIKTDGSRQPFDEEKLRAGMQRALEKRPVSVERLEAALVHIKHKLRATGEREVKSLVVGELVMTELQKLDEVAYIRFASVYRRFQDLNEFREEIDRLAREPAKQ.

A zinc finger spans residues 3–34 (CPFCGANDTKVIDSRLVAEGEQVRRRRECLAC). The region spanning 49 to 139 (PRLIKTDGSR…VYRRFQDLNE (91 aa)) is the ATP-cone domain.

This sequence belongs to the NrdR family. Zn(2+) serves as cofactor.

Its function is as follows. Negatively regulates transcription of bacterial ribonucleotide reductase nrd genes and operons by binding to NrdR-boxes. The sequence is that of Transcriptional repressor NrdR from Pseudomonas fluorescens (strain ATCC BAA-477 / NRRL B-23932 / Pf-5).